Reading from the N-terminus, the 358-residue chain is MKPFPRAEISSSALQNNLAVLRQQASRSQVMAVVKANGYGHGLLNVANCLHTADGFGLARLEEALELRAGGVKARLLLLEGFFRSTDLPLLVAHDIDTVVHHESQIEMLEQATLSKPVTVWLKVDSGMHRLGVTPEQFTQVYARLMACDNVAKPIHLMTHFACADEPENHYTQVQMQTFNQLTADLPGFRTLANSAGALYWPKSQGDWIRPGIALYGVSPVTGDCGANHGLIPAMNLVSRLIAVRDHKAGQPVGYGCYWTAKQDTRLGVVAIGYGDGYPRNAPEGTPVWVNGRRVPIVGRVSMDMLTVDLGADATDLVGDEALLWGAALPVEEVAEHIGTIAYELVTKLTPRVAVCLA.

The active-site Proton acceptor; specific for D-alanine is K35. Residue K35 is modified to N6-(pyridoxal phosphate)lysine. R130 lines the substrate pocket. Residue Y255 is the Proton acceptor; specific for L-alanine of the active site. M303 is a binding site for substrate.

The protein belongs to the alanine racemase family. Requires pyridoxal 5'-phosphate as cofactor.

The enzyme catalyses L-alanine = D-alanine. The protein operates within amino-acid biosynthesis; D-alanine biosynthesis; D-alanine from L-alanine: step 1/1. Its function is as follows. Catalyzes the interconversion of L-alanine and D-alanine. May also act on other amino acids. The protein is Alanine racemase (alr) of Shewanella sp. (strain ANA-3).